The chain runs to 234 residues: Probable transcriptional regulatory protein MYCGA1330 (234 aa).

Belongs to the TACO1 family.

It localises to the cytoplasm. The polypeptide is Probable transcriptional regulatory protein MYCGA1330 (Mycoplasmoides gallisepticum (strain R(low / passage 15 / clone 2)) (Mycoplasma gallisepticum)).